Consider the following 218-residue polypeptide: Riboflavin synthase (218 aa).

Lumazine-binding repeat units lie at residues 1–97 (MFTG…LGGH) and 98–194 (LVSG…EKLI). 2,4-dihydroxypteridine is bound by residues 4-6 (GII), 48-50 (CLT), 62-67 (DLSLET), 101-103 (GHV), lysine 136, 145-147 (SLT), and 159-164 (TIVPHT).

As to quaternary structure, homotrimer.

It carries out the reaction 2 6,7-dimethyl-8-(1-D-ribityl)lumazine + H(+) = 5-amino-6-(D-ribitylamino)uracil + riboflavin. The protein operates within cofactor biosynthesis; riboflavin biosynthesis; riboflavin from 2-hydroxy-3-oxobutyl phosphate and 5-amino-6-(D-ribitylamino)uracil: step 2/2. Functionally, catalyzes the dismutation of two molecules of 6,7-dimethyl-8-ribityllumazine, resulting in the formation of riboflavin and 5-amino-6-(D-ribitylamino)uracil. The polypeptide is Riboflavin synthase (ribE) (Photobacterium leiognathi).